The chain runs to 54 residues: ILLLLIASAPSVDAQLKTKDDVPLASFHANVKRTLQKLLNKRCCQIVPQCCEWN.

Positions 1 to 14 (ILLLLIASAPSVDA) are cleaved as a signal peptide. Residues 15-40 (QLKTKDDVPLASFHANVKRTLQKLLN) constitute a propeptide that is removed on maturation. At Glu52 the chain carries 4-carboxyglutamate.

This sequence belongs to the conotoxin T superfamily. In terms of processing, contains 2 disulfide bonds that can be either 'C1-C3, C2-C4' or 'C1-C4, C2-C3', since these disulfide connectivities have been observed for conotoxins with cysteine framework V (for examples, see AC P0DQQ7 and AC P81755). As to expression, expressed by the venom duct.

It localises to the secreted. This is Conotoxin mr5.4b from Conus marmoreus (Marble cone).